The chain runs to 123 residues: Preprofallaxidin-3 (123 aa).

Positions 1-22 are cleaved as a signal peptide; the sequence is MASLKKSLFLVLFLGLVSLSIC. Residues 23 to 46 constitute a propeptide that is removed on maturation; it reads EEKKRENEDDAEDENHEEESEEKR. The disordered stretch occupies residues 26 to 46; that stretch reads KRENEDDAEDENHEEESEEKR. The span at 30–42 shows a compositional bias: acidic residues; sequence EDDAEDENHEEES. L62 bears the Leucine amide mark. The propeptide occupies 66–70; the sequence is SEEKR. At F74 the chain carries Phenylalanine amide. Positions 78-82 are excised as a propeptide; sequence SEEKR. Phenylalanine amide is present on F88. Positions 92–96 are excised as a propeptide; sequence SEEKR. At I102 the chain carries Isoleucine amide. Residues 106 to 110 constitute a propeptide that is removed on maturation; sequence SEEKR. I116 carries the isoleucine amide modification. Residues 120-123 constitute a propeptide that is removed on maturation; sequence KKKK.

The protein belongs to the frog skin active peptide (FSAP) family. Brevinin subfamily. Expressed by the skin glands.

It is found in the secreted. In terms of biological role, fallaxidin-1.1 shows no antibacterial activity against Gram-positive or Gram-negative bacteria. Does not inhibit the formation of NO by neuronal nitric oxide synthase. Has no effect on splenocyte proliferation or smooth muscle contraction. Functionally, fallaxidin-1.2 shows no antibacterial activity against Gram-positive or Gram-negative bacteria. Does not inhibit the formation of NO by neuronal nitric oxide synthase. Has no effect on splenocyte proliferation or smooth muscle contraction. Its function is as follows. Fallaxidin-1.3 shows no antibacterial activity against Gram-positive or Gram-negative bacteria. Does not inhibit the formation of NO by neuronal nitric oxide synthase. Has no effect on splenocyte proliferation or smooth muscle contraction. Fallaxidin-3.2 shows antibacterial activity against the Gram-positive bacteria E.faecalis (MIC=100 uM) and L.lactis (MIC=500 uM). No antibacterial activity against the Gram-positive bacteria B.cereus, L.innocua, M.luteus, S.epidermidis, S.uberis and S.aureus, or the Gram-negative bacteria E.cloacae and E.coli. This is Preprofallaxidin-3 from Litoria fallax (Eastern dwarf tree frog).